A 79-amino-acid chain; its full sequence is DNA gyrase inhibitor YacG (79 aa).

Positions 7, 10, 26, and 30 each coordinate Zn(2+).

The protein belongs to the DNA gyrase inhibitor YacG family. As to quaternary structure, interacts with GyrB. The cofactor is Zn(2+).

In terms of biological role, inhibits all the catalytic activities of DNA gyrase by preventing its interaction with DNA. Acts by binding directly to the C-terminal domain of GyrB, which probably disrupts DNA binding by the gyrase. The chain is DNA gyrase inhibitor YacG from Shewanella pealeana (strain ATCC 700345 / ANG-SQ1).